A 385-amino-acid chain; its full sequence is MKRISLIGGTGSIGVQTCDVIEQHPDLFELEAYAFGTNVEVATEWINRLRPKYVSATSIEVLEQLKPRLTYEPLYFIGPEGLKECATAERADIVVTAVVGAVGLEPTLAAIQAGKDIALANKETLVTAGHLVKAAVKEHGVNLLPVDSEHSAIYQCLNGERREDVSKIILTASGGSFRDRSRDELADVTVEDALNHPNWSMGAKITIDSATMFNKGLEVIEAHWLFDIDYNDIEVILHRESIIHSMVEFKDAAVMAQLGNPDMRGPILYALSGPKRLEIEGNKRLNLKEIGKLHFEEADFNRYPALRLAFEAGRAGGSMPTVLNAANEVAVDLFLNGQITFLEIERLVEDAMARHEVIAEPTLAQILEVDRAVRQQIQQGIEGGE.

Residues Thr-10, Gly-11, Ser-12, Ile-13, Gly-36, Asn-38, and Asn-121 each coordinate NADPH. 1-deoxy-D-xylulose 5-phosphate is bound at residue Lys-122. Glu-123 is an NADPH binding site. Asp-147 contacts Mn(2+). Ser-148, Glu-149, Ser-173, and His-196 together coordinate 1-deoxy-D-xylulose 5-phosphate. Glu-149 provides a ligand contact to Mn(2+). Gly-202 lines the NADPH pocket. 4 residues coordinate 1-deoxy-D-xylulose 5-phosphate: Ser-209, Asn-214, Lys-215, and Glu-218. Glu-218 is a Mn(2+) binding site.

Belongs to the DXR family. Mg(2+) serves as cofactor. Requires Mn(2+) as cofactor.

It catalyses the reaction 2-C-methyl-D-erythritol 4-phosphate + NADP(+) = 1-deoxy-D-xylulose 5-phosphate + NADPH + H(+). It participates in isoprenoid biosynthesis; isopentenyl diphosphate biosynthesis via DXP pathway; isopentenyl diphosphate from 1-deoxy-D-xylulose 5-phosphate: step 1/6. Catalyzes the NADPH-dependent rearrangement and reduction of 1-deoxy-D-xylulose-5-phosphate (DXP) to 2-C-methyl-D-erythritol 4-phosphate (MEP). This chain is 1-deoxy-D-xylulose 5-phosphate reductoisomerase, found in Exiguobacterium sp. (strain ATCC BAA-1283 / AT1b).